We begin with the raw amino-acid sequence, 447 residues long: MSPALFLCQRCKEPLKLLQQQGGPLEVQHHANTPTEIPVSAESQVRTSGRPHSDGGRVSQGSALCTFTLLTSGGPDSEGGTTSQGNACCTFTLLGESASMRTMNTIQNTVLETFEILSDQKVVDHPLCVDCTDHLLMQLDDQLALLASDNQKYKSFQDRELLVSEEEREALHAELCAELSSLEQEEARLTQELEDLDGHHARVAAELRAAQAESKELYKQHEQHRVEYSVFKMEQLELMDQLSSVENQLTYALSQQYRLRQTNIFNATFTISDEGPLGVINNFRLGCLPGVRVGWTEISSAWGQTVLLLFSLSKIAGLQFQRYQLVPFGDHSYLKSLTGDGVLPLFSDGSHSVFLNNKFDCGMKAFLDCLQQFVEEIERDERCPCLPYRIHVKEGLMEDVWDSGECCSIRTHLNTEEEWSRALKFMLSDLKLILAWASLRFSRVQRP.

A coiled-coil region spans residues glutamate 169–tyrosine 228. Residues glutamate 186–glutamine 256 are required for homodimer formation.

Belongs to the beclin family. Homodimer (via coiled-coil domain). Interacts (via coiled-coil domain) with ATG14 (via coiled-coil domain); this interaction is tighter than BECN2 self-association. Interacts with AMBRA1, UVRAG and PIK3C3/VPS34; these interactions are not disrupted by starvation. Does not interact with RUBCN. Interacts (via N-terminus) with GPRASP1/GASP1; the interaction is direct. In terms of tissue distribution, expressed in brain, skeletal muscle, placenta, thymus and uterus. Expressed at a lower level in liver, testis, stomach, and 17-day-old embryos.

It localises to the cytoplasm. Functionally, involved in 2 distinct lysosomal degradation pathways: acts as a regulator of autophagy and as a regulator of G-protein coupled receptors turnover. Regulates degradation in lysosomes of a variety of G-protein coupled receptors via its interaction with GPRASP1/GASP1. The protein is Beclin-2 of Mus musculus (Mouse).